A 79-amino-acid chain; its full sequence is Acyl carrier protein (79 aa).

Residues 4–79 (EQILVDVQEA…DVVAYIETKL (76 aa)) form the Carrier domain. At Ser-39 the chain carries O-(pantetheine 4'-phosphoryl)serine.

The protein belongs to the acyl carrier protein (ACP) family. 4'-phosphopantetheine is transferred from CoA to a specific serine of apo-ACP by AcpS. This modification is essential for activity because fatty acids are bound in thioester linkage to the sulfhydryl of the prosthetic group.

It localises to the cytoplasm. It functions in the pathway lipid metabolism; fatty acid biosynthesis. Carrier of the growing fatty acid chain in fatty acid biosynthesis. The chain is Acyl carrier protein from Exiguobacterium sp. (strain ATCC BAA-1283 / AT1b).